A 511-amino-acid polypeptide reads, in one-letter code: Sodium/hydrogen exchanger 9B1 (511 aa).

A compositionally biased stretch (basic and acidic residues) spans 1–10; that stretch reads MHTTESKDEH. The tract at residues 1 to 41 is disordered; the sequence is MHTTESKDEHLEDENFQTSTTPQSLIDPNSTAHEETKTVIS. Over residues 16–31 the composition is skewed to polar residues; it reads FQTSTTPQSLIDPNST. The next 13 helical transmembrane spans lie at 67–87, 95–115, 116–136, 152–172, 187–207, 215–235, 260–280, 284–304, 337–357, 368–388, 398–418, 431–451, and 472–492; these read IITN…VLGS, LFGL…LQLI, RIPL…GFTI, WSSI…GLGL, LAVG…HFIM, FLLG…SMMV, VLAI…GGIV, IASI…GFFV, IGLH…AGTK, IITN…GAEV, IGIF…VTYI, IFIA…GPLV, and VAFL…GILG.

This sequence belongs to the monovalent cation:proton antiporter 1 (CPA1) transporter (TC 2.A.36) family.

It localises to the cell projection. It is found in the cilium. The protein resides in the flagellum membrane. Functionally, sperm-specific Na(+)/H(+) exchanger involved in intracellular pH regulation of spermatozoa. Involved in sperm motility and fertility. In Macaca fascicularis (Crab-eating macaque), this protein is Sodium/hydrogen exchanger 9B1 (SLC9B1).